The primary structure comprises 637 residues: tRNA uridine 5-carboxymethylaminomethyl modification enzyme MnmG (637 aa).

FAD-binding positions include 15–20, Ile127, and Ser182; that span reads GAGHAG. Position 276–290 (276–290) interacts with NAD(+); it reads GPRYCPSIEDKIVRF. An FAD-binding site is contributed by Gln373.

This sequence belongs to the MnmG family. Homodimer. Heterotetramer of two MnmE and two MnmG subunits. It depends on FAD as a cofactor.

It is found in the cytoplasm. Its function is as follows. NAD-binding protein involved in the addition of a carboxymethylaminomethyl (cmnm) group at the wobble position (U34) of certain tRNAs, forming tRNA-cmnm(5)s(2)U34. This Streptococcus pneumoniae serotype 4 (strain ATCC BAA-334 / TIGR4) protein is tRNA uridine 5-carboxymethylaminomethyl modification enzyme MnmG.